A 515-amino-acid polypeptide reads, in one-letter code: Maturase K (515 aa).

This sequence belongs to the intron maturase 2 family. MatK subfamily.

The protein localises to the plastid. Its subcellular location is the chloroplast. Functionally, usually encoded in the trnK tRNA gene intron. Probably assists in splicing its own and other chloroplast group II introns. The sequence is that of Maturase K from Picea sitchensis (Sitka spruce).